We begin with the raw amino-acid sequence, 347 residues long: NADH-ubiquinone oxidoreductase chain 2 (347 aa).

Helical transmembrane passes span 3-23 (PPIL…VMLS), 25-45 (HWLL…PVLM), 66-86 (ASML…QWVV), 96-116 (IMMT…FWVP), 122-142 (ITLT…MSVL), 149-169 (INTN…GWGG), 178-198 (IMAY…IYNP), 201-221 (MILN…LFML), 237-257 (FPLI…LPPL), 274-294 (NMII…YFYL), and 323-343 (TILL…TPML).

This sequence belongs to the complex I subunit 2 family. As to quaternary structure, core subunit of respiratory chain NADH dehydrogenase (Complex I) which is composed of 45 different subunits. Interacts with TMEM242.

It is found in the mitochondrion inner membrane. It catalyses the reaction a ubiquinone + NADH + 5 H(+)(in) = a ubiquinol + NAD(+) + 4 H(+)(out). Functionally, core subunit of the mitochondrial membrane respiratory chain NADH dehydrogenase (Complex I) which catalyzes electron transfer from NADH through the respiratory chain, using ubiquinone as an electron acceptor. Essential for the catalytic activity and assembly of complex I. In Canis rufus (Red wolf), this protein is NADH-ubiquinone oxidoreductase chain 2.